The primary structure comprises 125 residues: Glycine cleavage system H protein (125 aa).

One can recognise a Lipoyl-binding domain in the interval V22–K103. K63 carries the post-translational modification N6-lipoyllysine.

The protein belongs to the GcvH family. In terms of assembly, the glycine cleavage system is composed of four proteins: P, T, L and H. (R)-lipoate is required as a cofactor.

The glycine cleavage system catalyzes the degradation of glycine. The H protein shuttles the methylamine group of glycine from the P protein to the T protein. The sequence is that of Glycine cleavage system H protein from Bordetella avium (strain 197N).